The chain runs to 194 residues: Glycerol-3-phosphate acyltransferase (194 aa).

The next 5 membrane-spanning stretches (helical) occupy residues 2-22 (LIEILLLAGAYLLGSIPTGLL), 51-71 (SVGIATLVGDCLKGLIPVLAA), 80-100 (WIALAGLAAFLGHVYTVFLGF), 112-132 (VFLGLAPLAVLIALGIFVAVV), and 155-175 (FLSGRPPLVGVTVVIALLVIW).

Belongs to the PlsY family. Probably interacts with PlsX.

It is found in the cell inner membrane. The catalysed reaction is an acyl phosphate + sn-glycerol 3-phosphate = a 1-acyl-sn-glycero-3-phosphate + phosphate. It participates in lipid metabolism; phospholipid metabolism. Its function is as follows. Catalyzes the transfer of an acyl group from acyl-phosphate (acyl-PO(4)) to glycerol-3-phosphate (G3P) to form lysophosphatidic acid (LPA). This enzyme utilizes acyl-phosphate as fatty acyl donor, but not acyl-CoA or acyl-ACP. In Geobacter metallireducens (strain ATCC 53774 / DSM 7210 / GS-15), this protein is Glycerol-3-phosphate acyltransferase.